The primary structure comprises 483 residues: MHLDQLLRDIPAKIYGKVESIPVRNLTRDSRCTGVGDIFIARQGQMCNGNDYSGQAVENGAIAILSSLYNPFLSVVQIVTEDLTALEACLAARFYNDPSKRLDVIGVTGTNGKTTVSALARELMEYKGRCTGLVGTIEHILGEHRIIDSFTTPDAILLQKYFAEMVKQNLSSAVVEVSSIGLALGRVRETEFLAGVLTNVSLDHLDFHGSFEEYVVAKKQLFVSLPEHGVAVVNSDCEYAQSFLEISPARGVSYAVHQEADYRAVNLKFSSLGSTFDILYQGNVFSCETSLVGEHNVYNVLAALSVVHQILGGDFAELVHYVRYLSAPKGRLEPVLSGPCPIYIDYAHTPDALDNVCKILSQLLPADGRLIIVFGCGGDRDHSKRPIMAKVAETYGFSVVTSDNPRTEDPDQIIADICSGFSTDRYVIESDRRLAIVKAISMALDKDIVLVAGKGHEVYQIFKHQTIVFDDREVVCEALASIY.

Ser-30 lines the UDP-N-acetyl-alpha-D-muramoyl-L-alanyl-D-glutamate pocket. 109–115 (GTNGKTT) contacts ATP. UDP-N-acetyl-alpha-D-muramoyl-L-alanyl-D-glutamate contacts are provided by residues 151 to 152 (TT), Ser-178, and Arg-186. Residue Lys-218 is modified to N6-carboxylysine. Meso-2,6-diaminopimelate contacts are provided by residues Arg-380, 403–406 (DNPR), Gly-453, and Glu-457. Residues 403-406 (DNPR) carry the Meso-diaminopimelate recognition motif motif.

This sequence belongs to the MurCDEF family. MurE subfamily. Mg(2+) serves as cofactor. Post-translationally, carboxylation is probably crucial for Mg(2+) binding and, consequently, for the gamma-phosphate positioning of ATP.

The protein localises to the cytoplasm. The enzyme catalyses UDP-N-acetyl-alpha-D-muramoyl-L-alanyl-D-glutamate + meso-2,6-diaminopimelate + ATP = UDP-N-acetyl-alpha-D-muramoyl-L-alanyl-gamma-D-glutamyl-meso-2,6-diaminopimelate + ADP + phosphate + H(+). Its pathway is cell wall biogenesis; peptidoglycan biosynthesis. Catalyzes the addition of meso-diaminopimelic acid to the nucleotide precursor UDP-N-acetylmuramoyl-L-alanyl-D-glutamate (UMAG) in the biosynthesis of bacterial cell-wall peptidoglycan. This is UDP-N-acetylmuramoyl-L-alanyl-D-glutamate--2,6-diaminopimelate ligase from Chlamydia muridarum (strain MoPn / Nigg).